A 1389-amino-acid polypeptide reads, in one-letter code: MEVLMAERADLVFRNKVIDGTAIKRLISRLIDHFGMAYTSHILDQVKTLGFRQATATSISLGIDDLLTIPSKGWLVQDAEQQRLILEKHHHYGNVHAVEKLRQSIEIWYATSEYLRQEMNPNFRMTDPFNPVHMMSFSGARGNASQVHQLVGMRGLMSDPQGQMIDLPIQSNLREGLSLTEYIISCYGARKGVVDTAVRTSDAGYLTRRLVEVVQHIVVRRTDCGTIQGISVSPPNGMMPERIFIQTLIGRVLADYIYIGSRCIAVRNQDIGIGLVNRFITFQTQPISIRTPFTCKSTSWICRLCYGRSPTHGDLVELGEAVGIIAGQSIGEPGTQLTLRTFHTGGVFTGGTAEHVRAPSNGKIKFNEDLVHPTRTRHGHPAFLCSIDLYVTIESEDIIHNVTIPPKSFILVQNDQYVESEQVIAEIRAGTYTFHFKERVRKHIYSDSEGEMHWSTDVYHAPDFTYSNVHLLPKTSHLWILSGGSYKSSVVPFSIHKDQDQTNVYFLSAAKGKARNSFSVNNDQDQGKHKFFTSGLSGKKESGIPDYSEFNRILDTDHSNLIFPSILHKDSDLFLLAKRRRNRFIIPFQWIQEREKELWPRSSISIEIPINGIFRKNSILAYFDDLQYRRKGSGITKYGAIGLHSILKKEDLIEYGGVKEFKPKYQTKVDQFFFIPEEVHILPESFSIMVRNNSIIGVDTRITLNTRSRVGGLVRVEKKNKRIELKIFSGDIHFPVEMDKIFRHSGILIPPGRVKKEFKESKKWKNWIYVQSITPTKKKYFVLVRPVIIYEIADGINLETLFPQDPLQEKDNLELRVVNYILYGNGKPILGISGTCIQLVRTCLVLNWDQGNKSSSSEETHASFVEVSTRDLIRDFLRINLVKSHISYIRKRNDPLGSVLISDNRSDRTNPFYSIYSKEKIRQLLKENQGTIHTLLNRSKESQSLIILSSSNCFEMGPFNDVKHYNVIKESIKRDPLIPIRNSLGPLGTACQVANFYYILKTHNQISVTKNLQLENLKQTFQVLKYYLMDENGRIYNSDPCSNILFNPFNLNWHFLHHNYCEKKSTIISLGQFFFENVCITKHGPHLKSGQVIIVQIDSVVIRSAKSYLATPGATVHGHYGEILSEGDTLVTFIYEKSRSGDITQGLPKVEQVLEVRSIDSISMNLEKRVEGWNERITRILGIPWGFLIGAELTIVQSRISLVNKIQKVYRSQGVQIHNRHIEIIVRQITSKVLVSEDGMSNVFLPGELIGLFRAERTGRALKEAICYQAILLGITKASLNTQSFISEASFQETARVLAKAALRGRIDWLKGLKENVVLGGMIPVGTGFKGLVHRSKQHNNIPLETKKKNLFECEMRDILFHHKELFDFCISTNIHDTSEHLFLGFNDS.

Cysteine 224, cysteine 295, cysteine 302, and cysteine 305 together coordinate Zn(2+).

This sequence belongs to the RNA polymerase beta' chain family. RpoC2 subfamily. In plastids the minimal PEP RNA polymerase catalytic core is composed of four subunits: alpha, beta, beta', and beta''. When a (nuclear-encoded) sigma factor is associated with the core the holoenzyme is formed, which can initiate transcription. Zn(2+) serves as cofactor.

The protein localises to the plastid. It localises to the chloroplast. The enzyme catalyses RNA(n) + a ribonucleoside 5'-triphosphate = RNA(n+1) + diphosphate. In terms of biological role, DNA-dependent RNA polymerase catalyzes the transcription of DNA into RNA using the four ribonucleoside triphosphates as substrates. The polypeptide is DNA-directed RNA polymerase subunit beta'' (Morus indica (Mulberry)).